The primary structure comprises 398 residues: Protein trichome birefringence-like 45 (398 aa).

Residues 1–21 traverse the membrane as a helical; Signal-anchor for type II membrane protein segment; sequence MAAVQCLTFLFLFLLQNATSA. Positions 131–133 match the GDS motif motif; it reads GDS. A DCXHWCLPGXXDXWN motif motif is present at residues 375-389; it reads DCSHWCLPGLPDTWN.

Belongs to the PC-esterase family. TBL subfamily.

The protein localises to the membrane. In terms of biological role, may act as a bridging protein that binds pectin and other cell wall polysaccharides. Probably involved in maintaining esterification of pectins. May be involved in the specific O-acetylation of cell wall polymers. This Arabidopsis thaliana (Mouse-ear cress) protein is Protein trichome birefringence-like 45 (TBL45).